Consider the following 2289-residue polypeptide: Protein Ycf2 (2289 aa).

Residue 1643–1650 participates in ATP binding; sequence GSIGTGRS.

This sequence belongs to the Ycf2 family.

The protein resides in the plastid. Its subcellular location is the chloroplast stroma. In terms of biological role, probable ATPase of unknown function. Its presence in a non-photosynthetic plant (Epifagus virginiana) and experiments in tobacco indicate that it has an essential function which is probably not related to photosynthesis. This Aethionema grandiflorum (Persian stone-cress) protein is Protein Ycf2.